A 194-amino-acid chain; its full sequence is Protein GrpE (194 aa).

The segment at 1-44 is disordered; sequence MAEEKQNEELNEQEELNETEAETAEAEQTAAEADAPAEETQTEM. Over residues 9 to 25 the composition is skewed to acidic residues; that stretch reads ELNEQEELNETEAETAE.

This sequence belongs to the GrpE family. Homodimer.

The protein resides in the cytoplasm. In terms of biological role, participates actively in the response to hyperosmotic and heat shock by preventing the aggregation of stress-denatured proteins, in association with DnaK and GrpE. It is the nucleotide exchange factor for DnaK and may function as a thermosensor. Unfolded proteins bind initially to DnaJ; upon interaction with the DnaJ-bound protein, DnaK hydrolyzes its bound ATP, resulting in the formation of a stable complex. GrpE releases ADP from DnaK; ATP binding to DnaK triggers the release of the substrate protein, thus completing the reaction cycle. Several rounds of ATP-dependent interactions between DnaJ, DnaK and GrpE are required for fully efficient folding. In Bacillus licheniformis (strain ATCC 14580 / DSM 13 / JCM 2505 / CCUG 7422 / NBRC 12200 / NCIMB 9375 / NCTC 10341 / NRRL NRS-1264 / Gibson 46), this protein is Protein GrpE.